The sequence spans 545 residues: uncharacterized protein (545 aa).

2 stretches are compositionally biased toward basic and acidic residues: residues 34-44 (PMNKQNEKLKT) and 53-63 (PRNDYSRRVSR). Disordered stretches follow at residues 34-98 (PMNK…PESN), 269-296 (QNGT…PQDS), and 415-444 (ERPQ…SAPE). A compositionally biased stretch (polar residues) spans 69–78 (TDSSEQQITA). Residues 415–428 (ERPQRKTEHVKTPE) show a composition bias toward basic and acidic residues. A compositionally biased stretch (polar residues) spans 429-441 (ENLQTKNPTTMTS).

This is an uncharacterized protein from Mus musculus (Mouse).